We begin with the raw amino-acid sequence, 379 residues long: Odorant receptor 23a (379 aa).

Residues 1–36 (MKLSETLKIDYFRVQLNAWRICGALDLSEGRYWSWS) are Cytoplasmic-facing. A helical membrane pass occupies residues 37 to 57 (MLLCILVYLPTPMLLRGVYSF). Topologically, residues 58–64 (EDPVENN) are extracellular. N-linked (GlcNAc...) asparagine glycosylation occurs at Asn-64. A helical transmembrane segment spans residues 65–85 (FSLSLTVTSLSNLMKFCMYVA). The Cytoplasmic segment spans residues 86-125 (QLTKMVEVQSLIGQLDARVSGESQSERHRNMTEHLLRMSK). The helical transmembrane segment at 126-146 (LFQITYAVVFIIAAVPFVFET) threads the bilayer. Topologically, residues 147–162 (ELSLPMPMWFPFDWKN) are extracellular. The helical transmembrane segment at 163–183 (SMVAYIGALVFQEIGYVFQIM) threads the bilayer. Residues 184 to 253 (QCFAADSFPP…TKSLVSYPMM (70 aa)) lie on the Cytoplasmic side of the membrane. A helical membrane pass occupies residues 254-274 (VQFMVIGINIAITLFVLIFYV). At 275–280 (ETLYDR) the chain is on the extracellular side. A helical transmembrane segment spans residues 281–301 (IYYLCFLLGITVQTYPLCYYG). Residues 302-340 (TMVQESFAELHYAVFCSNWVDQSASYRGHMLILAERTKR) lie on the Cytoplasmic side of the membrane. A helical transmembrane segment spans residues 341–361 (MQLLLAGNLVPIHLSTYVACW). The Extracellular segment spans residues 362–379 (KGAYSFFTLMADRDGLGS).

This sequence belongs to the insect chemoreceptor superfamily. Heteromeric odorant receptor channel (TC 1.A.69) family. Or2a subfamily. In terms of assembly, interacts with Orco. Complexes exist early in the endomembrane system in olfactory sensory neurons (OSNs), coupling these complexes to the conserved ciliary trafficking pathway. As to expression, expressed in 10-40 sensory cells in the third antenna segment and in the maxillary palp.

The protein localises to the cell membrane. Its function is as follows. Odorant receptor which mediates acceptance or avoidance behavior, depending on its substrates. The odorant receptor repertoire encodes a large collection of odor stimuli that vary widely in identity, intensity, and duration. May form a complex with Orco to form odorant-sensing units, providing sensitive and prolonged odorant signaling and calcium permeability. This chain is Odorant receptor 23a (Or23a), found in Drosophila melanogaster (Fruit fly).